The sequence spans 408 residues: Retron Ec48 reverse transcriptase (408 aa).

The region spanning 43 to 269 (EELKAIAELP…EPIKVHGLRV (227 aa)) is the Reverse transcriptase domain. Residues Asp137, Asp216, and Asp217 each contribute to the Mg(2+) site.

It belongs to the bacterial reverse transcriptase family.

It catalyses the reaction DNA(n) + a 2'-deoxyribonucleoside 5'-triphosphate = DNA(n+1) + diphosphate. Reverse transcriptase (RT) component of antiviral defense system retron Ec48, composed of a non-coding RNA (ncRNA), this reverse transcriptase (RT) and the following membrane protein. Expression of this retron confers protection against bacteriophages lambda, T2, T4, T5 and T7. At multiplicity of infection (MOI) of 0.02 cultures grow normally when infected with lambda without collapsing, at MOI 2 cultures enter growth stasis. At MOI 3 cell membranes are permeabilized within 15 minutes of infection but do not lyse, suggesting the phage are not able to finish a replication cycle. Antiviral defense is suppressed by mutations that knockout the lambda gam expression or phage T7 gp5.9 expression; both viral genes inhibit host RecBCD. The Ec48 retron may sense the integrity of the RecBCD enzyme; when RecBCD is perturbed by viral proteins the Ec48 effector (the membrane protein) is activated, leading to abortive infection and bacterial growth arrest. Responsible for synthesis of msDNA-Ec48 (a branched molecule with RNA linked by a 2',5'-phosphodiester bond to ssDNA). The retron transcript serves as primer (from a conserved internal G residue) and template for the reaction, and codes for the RT. The chain is Retron Ec48 reverse transcriptase from Escherichia coli.